A 638-amino-acid polypeptide reads, in one-letter code: Chaperone protein HtpG (638 aa).

Residues 1-346 (MSQQETHGFQ…SNDLPLNVSR (346 aa)) form an a; substrate-binding region. The interval 347–563 (EILQDNKVTT…EGEMSTQMIK (217 aa)) is b. The tract at residues 564–638 (LMEAAGQAVP…MNEMLLAKLK (75 aa)) is c.

It belongs to the heat shock protein 90 family. Homodimer.

The protein localises to the cytoplasm. Its function is as follows. Molecular chaperone. Has ATPase activity. This Shewanella sediminis (strain HAW-EB3) protein is Chaperone protein HtpG.